The primary structure comprises 271 residues: Tryptophan synthase alpha chain (271 aa).

Active-site proton acceptor residues include glutamate 49 and aspartate 60.

This sequence belongs to the TrpA family. As to quaternary structure, tetramer of two alpha and two beta chains.

The catalysed reaction is (1S,2R)-1-C-(indol-3-yl)glycerol 3-phosphate + L-serine = D-glyceraldehyde 3-phosphate + L-tryptophan + H2O. It participates in amino-acid biosynthesis; L-tryptophan biosynthesis; L-tryptophan from chorismate: step 5/5. Its function is as follows. The alpha subunit is responsible for the aldol cleavage of indoleglycerol phosphate to indole and glyceraldehyde 3-phosphate. The chain is Tryptophan synthase alpha chain from Aromatoleum aromaticum (strain DSM 19018 / LMG 30748 / EbN1) (Azoarcus sp. (strain EbN1)).